The primary structure comprises 189 residues: Chitin synthase 1 (189 aa).

The protein belongs to the chitin synthase family.

The protein resides in the cell membrane. It carries out the reaction [(1-&gt;4)-N-acetyl-beta-D-glucosaminyl](n) + UDP-N-acetyl-alpha-D-glucosamine = [(1-&gt;4)-N-acetyl-beta-D-glucosaminyl](n+1) + UDP + H(+). In terms of biological role, polymerizes chitin, a structural polymer of the cell wall and septum, by transferring the sugar moiety of UDP-GlcNAc to the non-reducing end of the growing chitin polymer. This Exophiala exophialae (Black yeast-like fungus) protein is Chitin synthase 1 (CHS1).